Reading from the N-terminus, the 493-residue chain is Argininosuccinate lyase (493 aa).

This sequence belongs to the lyase 1 family. Argininosuccinate lyase subfamily.

Its subcellular location is the cytoplasm. It catalyses the reaction 2-(N(omega)-L-arginino)succinate = fumarate + L-arginine. The protein operates within amino-acid biosynthesis; L-arginine biosynthesis; L-arginine from L-ornithine and carbamoyl phosphate: step 3/3. This is Argininosuccinate lyase from Methanospirillum hungatei JF-1 (strain ATCC 27890 / DSM 864 / NBRC 100397 / JF-1).